The sequence spans 336 residues: 4-hydroxy-3-methylbut-2-enyl diphosphate reductase (336 aa).

A [4Fe-4S] cluster-binding site is contributed by Cys-32. Residues His-61 and His-94 each contribute to the (2E)-4-hydroxy-3-methylbut-2-enyl diphosphate site. Positions 61 and 94 each coordinate dimethylallyl diphosphate. Isopentenyl diphosphate contacts are provided by His-61 and His-94. [4Fe-4S] cluster is bound at residue Cys-116. His-148 contributes to the (2E)-4-hydroxy-3-methylbut-2-enyl diphosphate binding site. His-148 is a dimethylallyl diphosphate binding site. Isopentenyl diphosphate is bound at residue His-148. Glu-150 serves as the catalytic Proton donor. Thr-189 provides a ligand contact to (2E)-4-hydroxy-3-methylbut-2-enyl diphosphate. [4Fe-4S] cluster is bound at residue Cys-219. Residues Ser-247, Ser-248, Asn-249, and Ser-292 each contribute to the (2E)-4-hydroxy-3-methylbut-2-enyl diphosphate site. The dimethylallyl diphosphate site is built by Ser-247, Ser-248, Asn-249, and Ser-292. Isopentenyl diphosphate-binding residues include Ser-247, Ser-248, Asn-249, and Ser-292.

Belongs to the IspH family. Requires [4Fe-4S] cluster as cofactor.

The enzyme catalyses isopentenyl diphosphate + 2 oxidized [2Fe-2S]-[ferredoxin] + H2O = (2E)-4-hydroxy-3-methylbut-2-enyl diphosphate + 2 reduced [2Fe-2S]-[ferredoxin] + 2 H(+). It carries out the reaction dimethylallyl diphosphate + 2 oxidized [2Fe-2S]-[ferredoxin] + H2O = (2E)-4-hydroxy-3-methylbut-2-enyl diphosphate + 2 reduced [2Fe-2S]-[ferredoxin] + 2 H(+). The protein operates within isoprenoid biosynthesis; dimethylallyl diphosphate biosynthesis; dimethylallyl diphosphate from (2E)-4-hydroxy-3-methylbutenyl diphosphate: step 1/1. Its pathway is isoprenoid biosynthesis; isopentenyl diphosphate biosynthesis via DXP pathway; isopentenyl diphosphate from 1-deoxy-D-xylulose 5-phosphate: step 6/6. Catalyzes the conversion of 1-hydroxy-2-methyl-2-(E)-butenyl 4-diphosphate (HMBPP) into a mixture of isopentenyl diphosphate (IPP) and dimethylallyl diphosphate (DMAPP). Acts in the terminal step of the DOXP/MEP pathway for isoprenoid precursor biosynthesis. This Gluconobacter oxydans (strain 621H) (Gluconobacter suboxydans) protein is 4-hydroxy-3-methylbut-2-enyl diphosphate reductase.